A 267-amino-acid chain; its full sequence is 5'-nucleotidase SurE (267 aa).

A divalent metal cation-binding residues include D14, D15, S45, and N100.

This sequence belongs to the SurE nucleotidase family. A divalent metal cation is required as a cofactor.

It is found in the cytoplasm. The catalysed reaction is a ribonucleoside 5'-phosphate + H2O = a ribonucleoside + phosphate. Its function is as follows. Nucleotidase that shows phosphatase activity on nucleoside 5'-monophosphates. The polypeptide is 5'-nucleotidase SurE (Methanosarcina mazei (strain ATCC BAA-159 / DSM 3647 / Goe1 / Go1 / JCM 11833 / OCM 88) (Methanosarcina frisia)).